The primary structure comprises 76 residues: Alpha/kappa-conotoxin-like pl14.3 (76 aa).

Positions 1 to 27 (MPSVRSVACCCLLWMMLSVQLVTPGSP) are cleaved as a signal peptide. Positions 28 to 39 (ATAQLSGQRTAR) are excised as a propeptide. Disulfide bonds link cysteine 46–cysteine 61 and cysteine 50–cysteine 63. Aspartate 64 carries the post-translational modification Aspartic acid 1-amide. Residues 65 to 76 (GKRDVVSSSMAV) constitute a propeptide that is removed on maturation.

This sequence belongs to the conotoxin J superfamily. Expressed by the venom duct.

It is found in the secreted. Highly inhibits both nicotinic acetylcholine receptors (neuronal (alpha-3/beta-4) and muscular (alpha-1/beta-1/epsilon/delta) subtypes) and the voltage-gated potassium channel Kv1.6/KCNA6 subtype. The sequence is that of Alpha/kappa-conotoxin-like pl14.3 from Conus planorbis (Planorbis cone).